The following is a 548-amino-acid chain: 4-coumarate--CoA ligase CCL1 (548 aa).

ATP contacts are provided by residues 195 to 203 (SSGTTGLPK), 337 to 342 (QGYGMT), aspartate 426, 438 to 441 (IVDR), and lysine 532. Residues 268-337 (EISKLLELIE…EKLPHAKLGQ (70 aa)) are SBD1. Residues 338–405 (GYGMTEAGPV…IRGKQIMKGY (68 aa)) are SBD2.

The protein belongs to the ATP-dependent AMP-binding enzyme family. As to expression, mostly expressed in glandular trichomes (lupulin glands) after flowering, and, to a lower extent, in stems, leaves, cones and flowers.

It localises to the cytoplasm. The enzyme catalyses (E)-4-coumarate + ATP + CoA = (E)-4-coumaroyl-CoA + AMP + diphosphate. It functions in the pathway secondary metabolite biosynthesis. Involved in the biosynthesis of prenylated phenolics natural products which contribute to the bitter taste of beer and display broad biological activities. Catalyzes the ligation of CoA on (E)-4-coumarate to produce (E)-4-coumaroyl-CoA. This Humulus lupulus (European hop) protein is 4-coumarate--CoA ligase CCL1.